The primary structure comprises 606 residues: Membrane protein insertase YidC (606 aa).

Residues 8–28 (LILATALSFIVILVWFVLFPP) form a helical membrane-spanning segment. Residues 33-59 (MPLTGETSTELTPDAATGSLPSVTSDT) form a disordered region. 6 helical membrane passes run 116-136 (IVTM…YGWA), 348-368 (FIDS…FFLL), 374-394 (FIGN…AILL), 448-468 (LPIL…FVTI), 506-526 (SIMA…SMWL), and 542-562 (IFAW…SGLV).

Belongs to the OXA1/ALB3/YidC family. Type 1 subfamily. Interacts with the Sec translocase complex via SecD. Specifically interacts with transmembrane segments of nascent integral membrane proteins during membrane integration.

Its subcellular location is the cell inner membrane. Its function is as follows. Required for the insertion and/or proper folding and/or complex formation of integral membrane proteins into the membrane. Involved in integration of membrane proteins that insert both dependently and independently of the Sec translocase complex, as well as at least some lipoproteins. Aids folding of multispanning membrane proteins. The chain is Membrane protein insertase YidC from Roseobacter denitrificans (strain ATCC 33942 / OCh 114) (Erythrobacter sp. (strain OCh 114)).